We begin with the raw amino-acid sequence, 369 residues long: Protein RecA (369 aa).

66–73 (GPESSGKT) contributes to the ATP binding site. Residues 328 to 369 (GIDAESLEEKEDPEKVKEQRAKKAAPGEEKPAEPASPEKTDK) are disordered. The segment covering 339-369 (DPEKVKEQRAKKAAPGEEKPAEPASPEKTDK) has biased composition (basic and acidic residues).

It belongs to the RecA family.

The protein resides in the cytoplasm. Can catalyze the hydrolysis of ATP in the presence of single-stranded DNA, the ATP-dependent uptake of single-stranded DNA by duplex DNA, and the ATP-dependent hybridization of homologous single-stranded DNAs. It interacts with LexA causing its activation and leading to its autocatalytic cleavage. In Lactobacillus delbrueckii subsp. bulgaricus (strain ATCC BAA-365 / Lb-18), this protein is Protein RecA.